We begin with the raw amino-acid sequence, 439 residues long: Ribosomal protein uS12 methylthiotransferase RimO (439 aa).

The MTTase N-terminal domain occupies 7-119 (KQLCLISLGC…IDIMIAKKQN (113 aa)). Residues Cys-16, Cys-50, Cys-82, Cys-151, Cys-155, and Cys-158 each coordinate [4Fe-4S] cluster. The Radical SAM core domain maps to 137–368 (TGSSVHAYVK…ALKHQNHSFK (232 aa)).

Belongs to the methylthiotransferase family. RimO subfamily. Requires [4Fe-4S] cluster as cofactor.

The protein localises to the cytoplasm. It carries out the reaction L-aspartate(89)-[ribosomal protein uS12]-hydrogen + (sulfur carrier)-SH + AH2 + 2 S-adenosyl-L-methionine = 3-methylsulfanyl-L-aspartate(89)-[ribosomal protein uS12]-hydrogen + (sulfur carrier)-H + 5'-deoxyadenosine + L-methionine + A + S-adenosyl-L-homocysteine + 2 H(+). In terms of biological role, catalyzes the methylthiolation of an aspartic acid residue of ribosomal protein uS12. In Helicobacter pylori (strain P12), this protein is Ribosomal protein uS12 methylthiotransferase RimO.